Consider the following 288-residue polypeptide: Acetyl-coenzyme A carboxylase carboxyl transferase subunit beta (288 aa).

Residues 34 to 288 (LFAKCPACKH…HLVSFHGGGQ (255 aa)) form the CoA carboxyltransferase N-terminal domain. Cys38, Cys41, Cys56, and Cys59 together coordinate Zn(2+). The C4-type zinc finger occupies 38 to 59 (CPACKHMIYKKDLGLAKICPTC).

This sequence belongs to the AccD/PCCB family. In terms of assembly, acetyl-CoA carboxylase is a heterohexamer composed of biotin carboxyl carrier protein (AccB), biotin carboxylase (AccC) and two subunits each of ACCase subunit alpha (AccA) and ACCase subunit beta (AccD). It depends on Zn(2+) as a cofactor.

The protein resides in the cytoplasm. It carries out the reaction N(6)-carboxybiotinyl-L-lysyl-[protein] + acetyl-CoA = N(6)-biotinyl-L-lysyl-[protein] + malonyl-CoA. Its pathway is lipid metabolism; malonyl-CoA biosynthesis; malonyl-CoA from acetyl-CoA: step 1/1. In terms of biological role, component of the acetyl coenzyme A carboxylase (ACC) complex. Biotin carboxylase (BC) catalyzes the carboxylation of biotin on its carrier protein (BCCP) and then the CO(2) group is transferred by the transcarboxylase to acetyl-CoA to form malonyl-CoA. The protein is Acetyl-coenzyme A carboxylase carboxyl transferase subunit beta of Streptococcus pyogenes serotype M49 (strain NZ131).